The chain runs to 274 residues: Diaminopimelate epimerase (274 aa).

Substrate-binding residues include Asn-13, Gln-47, and Asn-65. Catalysis depends on Cys-74, which acts as the Proton donor. Substrate contacts are provided by residues 75–76, Asn-149, Asn-182, and 200–201; these read GN and ER. Residue Cys-209 is the Proton acceptor of the active site. 210-211 is a binding site for substrate; that stretch reads GT.

Belongs to the diaminopimelate epimerase family. Homodimer.

The protein resides in the cytoplasm. The enzyme catalyses (2S,6S)-2,6-diaminopimelate = meso-2,6-diaminopimelate. The protein operates within amino-acid biosynthesis; L-lysine biosynthesis via DAP pathway; DL-2,6-diaminopimelate from LL-2,6-diaminopimelate: step 1/1. In terms of biological role, catalyzes the stereoinversion of LL-2,6-diaminopimelate (L,L-DAP) to meso-diaminopimelate (meso-DAP), a precursor of L-lysine and an essential component of the bacterial peptidoglycan. In Rhizorhabdus wittichii (strain DSM 6014 / CCUG 31198 / JCM 15750 / NBRC 105917 / EY 4224 / RW1) (Sphingomonas wittichii), this protein is Diaminopimelate epimerase.